The sequence spans 793 residues: Alanine--tRNA ligase, mitochondrial (793 aa).

ATP contacts are provided by residues Arg-88, Trp-187, and 224–226 (IWN). L-alanine contacts are provided by Asn-226 and Asp-249. Gly-253 is an ATP binding site. The Zn(2+) site is built by His-594, His-598, Cys-706, and His-710.

The protein belongs to the class-II aminoacyl-tRNA synthetase family. As to quaternary structure, monomer. Zn(2+) serves as cofactor.

The protein localises to the mitochondrion. The enzyme catalyses tRNA(Ala) + L-alanine + ATP = L-alanyl-tRNA(Ala) + AMP + diphosphate. Catalyzes the attachment of alanine to tRNA(Ala) in a two-step reaction: alanine is first activated by ATP to form Ala-AMP and then transferred to the acceptor end of tRNA(Ala). Also edits incorrectly charged tRNA(Ala) via its editing domain. The sequence is that of Alanine--tRNA ligase, mitochondrial from Caenorhabditis elegans.